Reading from the N-terminus, the 200-residue chain is Large ribosomal subunit protein uL4 (200 aa).

A disordered region spans residues 44–70 (AQKTRAEVTGSGKKPWRQKGTGRARSG).

Belongs to the universal ribosomal protein uL4 family. In terms of assembly, part of the 50S ribosomal subunit.

Its function is as follows. One of the primary rRNA binding proteins, this protein initially binds near the 5'-end of the 23S rRNA. It is important during the early stages of 50S assembly. It makes multiple contacts with different domains of the 23S rRNA in the assembled 50S subunit and ribosome. In terms of biological role, protein L4 is a both a transcriptional repressor and a translational repressor protein. It regulates transcription of the S10 operon (to which L4 belongs) by causing premature termination of transcription within the S10 leader. L4 controls the translation of the S10 operon by binding to its mRNA. Functionally, this protein when expressed in E.coli represses both transcription and translation of the endogenous S10 operon. As the M.morganii S10 leader can be regulated in vitro by the E.coli L4 protein this strongly suggests the endogenous protein controls its own S10 operon in a similar fashion. Forms part of the polypeptide exit tunnel. The protein is Large ribosomal subunit protein uL4 (rplD) of Morganella morganii (Proteus morganii).